The sequence spans 551 residues: Solute carrier family 22 member 4 (551 aa).

Residues 1-20 (MRDYDEAIAFLGEWGPFQRL) are Cytoplasmic-facing. A helical transmembrane segment spans residues 21–41 (IFFLLSASIIPNGFNGMSVVF). The Extracellular segment spans residues 42–141 (LAGTPEHRCR…WNLVCEDNWK (100 aa)). Residues asparagine 57, asparagine 64, and asparagine 91 are each glycosylated (N-linked (GlcNAc...) asparagine). The chain crosses the membrane as a helical span at residues 142–162 (VPLTTSLFFVGVLLGSFVSGQ). Residues 163–171 (LSDRFGRKN) lie on the Cytoplasmic side of the membrane. A helical transmembrane segment spans residues 172–192 (VLFATMAVQTGFSFLQIFSIS). Topologically, residues 193 to 197 (WEMFT) are extracellular. The chain crosses the membrane as a helical span at residues 198-218 (VLFLIVGMGQISNYVVAFILG). 218-225 (GTEILGKS) provides a ligand contact to ATP. Topologically, residues 219-232 (TEILGKSVRIIFST) are cytoplasmic. A helical transmembrane segment spans residues 233-253 (LGVCTFFAVGYMLLPLFAYFI). Topologically, residues 254–257 (RDWR) are extracellular. Residues 258–278 (MLLLALTVPGVLCVPLWWFIP) form a helical membrane-spanning segment. The Cytoplasmic portion of the chain corresponds to 279–337 (ESPRWLISQRRFREAEDIIQKAAKMNNIAVPAVIFDSVEELNPLKQQKAFILDLFRTWN). The chain crosses the membrane as a helical span at residues 338–358 (IAIMTIMSLLLWMLTSVGYFA). Over 359-371 (LSLDTPNLHGDAY) the chain is Extracellular. Residues 372–392 (LNCFLSALIEIPAYITAWLLL) traverse the membrane as a helical segment. Residues 393–399 (RTLPRRY) lie on the Cytoplasmic side of the membrane. Residues 400 to 420 (IIAAVLFWGGGVLLFIQLVPV) traverse the membrane as a helical segment. The Extracellular segment spans residues 421 to 426 (DYYFLS). The chain crosses the membrane as a helical span at residues 427 to 447 (IGLVMLGKFGITSAFSMLYVF). Topologically, residues 448-460 (TAELYPTMVRNMA) are cytoplasmic. The chain crosses the membrane as a helical span at residues 461 to 481 (VGVTSMASRVGSIIAPYFVYL). At 482 to 486 (GAYNR) the chain is on the extracellular side. The chain crosses the membrane as a helical span at residues 487–507 (MLPYIVMGSLTVLIGILTLFF). Over 508 to 551 (PESLGMTLPETLEQMQKVKWFRSGKKTRDSMETEENPKVLITAF) the chain is Cytoplasmic.

This sequence belongs to the major facilitator (TC 2.A.1) superfamily. Organic cation transporter (TC 2.A.1.19) family. Interacts with PDZK1.

The protein localises to the apical cell membrane. Its subcellular location is the basal cell membrane. It is found in the mitochondrion membrane. It catalyses the reaction ergothioneine(out) + Na(+)(out) = ergothioneine(in) + Na(+)(in). The catalysed reaction is acetylcholine(in) = acetylcholine(out). The enzyme catalyses (R)-carnitine(out) + Na(+)(out) = (R)-carnitine(in) + Na(+)(in). It carries out the reaction glycine betaine(out) + Na(+)(out) = glycine betaine(in) + Na(+)(in). Allosterically activated by intracellular ATP. Its function is as follows. Transporter that mediates the transport of endogenous and microbial zwitterions and organic cations. Functions as a Na(+)-dependent and pH-dependent high affinity microbial symporter of potent food-derived antioxidant ergothioeine. Transports one sodium ion with one ergothioeine molecule. Involved in the absorption of ergothioneine from the luminal/apical side of the small intestine and renal tubular cells, and into non-parenchymal liver cells, thereby contributing to maintain steady-state ergothioneine level in the body. Also mediates the bidirectional transport of acetycholine, although the exact transport mechanism has not been fully identified yet. Most likely exports anti-inflammatory acetylcholine in non-neuronal tissues, thereby contributing to the non-neuronal cholinergic system. Displays a general physiological role linked to better survival by controlling inflammation and oxidative stress, which may be related to ergothioneine and acetycholine transports. May also function as a low-affinity Na(+)-dependent transporter of L-carnitine through the mitochondrial membrane, thereby maintaining intracellular carnitine homeostasis. May contribute to regulate the transport of cationic compounds in testis across the blood-testis-barrier. The protein is Solute carrier family 22 member 4 (SLC22A4) of Papio anubis (Olive baboon).